The following is a 297-amino-acid chain: Lipoyl synthase (297 aa).

Positions 40, 45, 51, 67, 71, 74, and 280 each coordinate [4Fe-4S] cluster. Positions 53-269 (AVRKTATFMI…KEIALSKGFS (217 aa)) constitute a Radical SAM core domain.

It belongs to the radical SAM superfamily. Lipoyl synthase family. [4Fe-4S] cluster serves as cofactor.

It localises to the cytoplasm. It catalyses the reaction [[Fe-S] cluster scaffold protein carrying a second [4Fe-4S](2+) cluster] + N(6)-octanoyl-L-lysyl-[protein] + 2 oxidized [2Fe-2S]-[ferredoxin] + 2 S-adenosyl-L-methionine + 4 H(+) = [[Fe-S] cluster scaffold protein] + N(6)-[(R)-dihydrolipoyl]-L-lysyl-[protein] + 4 Fe(3+) + 2 hydrogen sulfide + 2 5'-deoxyadenosine + 2 L-methionine + 2 reduced [2Fe-2S]-[ferredoxin]. The protein operates within protein modification; protein lipoylation via endogenous pathway; protein N(6)-(lipoyl)lysine from octanoyl-[acyl-carrier-protein]. Functionally, catalyzes the radical-mediated insertion of two sulfur atoms into the C-6 and C-8 positions of the octanoyl moiety bound to the lipoyl domains of lipoate-dependent enzymes, thereby converting the octanoylated domains into lipoylated derivatives. The protein is Lipoyl synthase of Bacillus cereus (strain ATCC 14579 / DSM 31 / CCUG 7414 / JCM 2152 / NBRC 15305 / NCIMB 9373 / NCTC 2599 / NRRL B-3711).